The following is a 179-amino-acid chain: Natural killer cells antigen CD94 (179 aa).

At 1–10 the chain is on the cytoplasmic side; sequence MAVFKTTLWR. Residues 11 to 31 form a helical; Signal-anchor for type II membrane protein membrane-spanning segment; the sequence is LISGTLGIICLSLMATLGILL. Residues 32 to 179 are Extracellular-facing; the sequence is KNSFTKLSIE…NRYICKQQLI (148 aa). Intrachain disulfides connect cysteine 58–cysteine 70 and cysteine 61–cysteine 72. Residues 68–175 form the C-type lectin domain; the sequence is YRCNCYFISS…CEDKNRYICK (108 aa). Asparagine 83 and asparagine 132 each carry an N-linked (GlcNAc...) asparagine glycan. 2 disulfides stabilise this stretch: cysteine 89-cysteine 174 and cysteine 152-cysteine 166.

As to quaternary structure, can form disulfide-bonded heterodimer with NKG2 family members KLRC1 and KLRC2. KLRD1-KLRC1 heterodimer interacts with peptide-bound MHC-E-B2M heterotrimeric complex. KLRD1 plays a prominent role in directly interacting with MHC-E. KLRD1-KLRC1 interacts with much higher affinity with peptide-bound MHC-E-B2M than KLRD1-KLRC2. Interacts with the adapter protein TYROBP/DAP12; this interaction is required for cell surface expression and cell activation. As to expression, natural killer cells.

The protein localises to the cell membrane. Functionally, immune receptor involved in self-nonself discrimination. In complex with KLRC1 or KLRC2 on cytotoxic and regulatory lymphocyte subsets, recognizes non-classical major histocompatibility (MHC) class Ib molecule MHC-E loaded with self-peptides derived from the signal sequence of classical MHC class Ia and non-classical MHC class Ib molecules. Enables cytotoxic cells to monitor the expression of MHC class I molecules in healthy cells and to tolerate self. Primarily functions as a ligand binding subunit as it lacks the capacity to signal. KLRD1-KLRC1 acts as an immune inhibitory receptor. Key inhibitory receptor on natural killer (NK) cells that regulates their activation and effector functions. Dominantly counteracts T cell receptor signaling on a subset of memory/effector CD8-positive T cells as part of an antigen-driven response to avoid autoimmunity. On intraepithelial CD8-positive gamma-delta regulatory T cells triggers TGFB1 secretion, which in turn limits the cytotoxic programming of intraepithelial CD8-positive alpha-beta T cells, distinguishing harmless from pathogenic antigens. In MHC-E-rich tumor microenvironment, acts as an immune inhibitory checkpoint and may contribute to progressive loss of effector functions of NK cells and tumor-specific T cells, a state known as cell exhaustion. Upon MHC-E-peptide binding, transmits intracellular signals through KLRC1 immunoreceptor tyrosine-based inhibition motifs (ITIMs) by recruiting INPP5D/SHIP-1 and INPPL1/SHIP-2 tyrosine phosphatases to ITIMs, and ultimately opposing signals transmitted by activating receptors through dephosphorylation of proximal signaling molecules. In terms of biological role, KLRD1-KLRC2 acts as an immune activating receptor. On cytotoxic lymphocyte subsets recognizes MHC-E loaded with signal sequence-derived peptides from non-classical MHC class Ib MHC-G molecules, likely playing a role in the generation and effector functions of adaptive NK cells and in maternal-fetal tolerance during pregnancy. Regulates the effector functions of terminally differentiated cytotoxic lymphocyte subsets, and in particular may play a role in adaptive NK cell response to viral infection. Upon MHC-E-peptide binding, transmits intracellular signals via the adapter protein TYROBP/DAP12, triggering the phosphorylation of proximal signaling molecules and cell activation. The sequence is that of Natural killer cells antigen CD94 (KLRD1) from Pan troglodytes (Chimpanzee).